Reading from the N-terminus, the 918-residue chain is Plasma membrane ATPase 1 (918 aa).

Low complexity predominate over residues methionine 1–alanine 18. A disordered region spans residues methionine 1 to proline 84. The Cytoplasmic segment spans residues methionine 1–lysine 115. Residues alanine 33–isoleucine 47 are compositionally biased toward acidic residues. Phosphoserine is present on serine 61. The chain crosses the membrane as a helical span at residues phenylalanine 116 to alanine 136. The Extracellular portion of the chain corresponds to glycine 137–aspartate 140. A helical transmembrane segment spans residues tryptophan 141 to valine 160. At glutamine 161–asparagine 291 the chain is on the cytoplasmic side. Threonine 175 bears the Phosphothreonine mark. Lysine 252 participates in a covalent cross-link: Glycyl lysine isopeptide (Lys-Gly) (interchain with G-Cter in ubiquitin). A helical transmembrane segment spans residues glycine 292–phenylalanine 313. Topologically, residues tyrosine 314–tyrosine 325 are extracellular. The helical transmembrane segment at threonine 326–alanine 347 threads the bilayer. Over valine 348 to isoleucine 719 the chain is Cytoplasmic. Aspartate 378 serves as the catalytic 4-aspartylphosphate intermediate. A Glycyl lysine isopeptide (Lys-Gly) (interchain with G-Cter in ubiquitin) cross-link involves residue lysine 555. Aspartate 634 and aspartate 638 together coordinate Mg(2+). The helical transmembrane segment at aspartate 720–tyrosine 738 threads the bilayer. Over aspartate 739–arginine 754 the chain is Extracellular. The helical transmembrane segment at leucine 755 to leucine 774 threads the bilayer. The Cytoplasmic portion of the chain corresponds to threonine 775–glutamine 824. A helical membrane pass occupies residues leucine 825–tryptophan 845. Residues serine 846–arginine 857 are Extracellular-facing. The helical transmembrane segment at valine 858–tyrosine 874 threads the bilayer. Residues glutamate 875–threonine 918 are Cytoplasmic-facing. A Phosphoserine modification is found at serine 911. Phosphothreonine occurs at positions 912 and 918.

The protein belongs to the cation transport ATPase (P-type) (TC 3.A.3) family. Type IIIA subfamily. As to quaternary structure, interacts with its cargot receptor EXP1 for its transport within the cell and maturation. In terms of processing, phosphorylated on multiple Ser and Thr residues.

The protein resides in the cell membrane. The catalysed reaction is ATP + H2O + H(+)(in) = ADP + phosphate + 2 H(+)(out). In terms of biological role, the plasma membrane ATPase of plants and fungi is a hydrogen ion pump. The proton gradient it generates drives the active transport of nutrients by H(+)-symport. The resulting external acidification and/or internal alkinization may mediate growth responses. This is Plasma membrane ATPase 1 (PMA1) from Saccharomyces cerevisiae (strain ATCC 204508 / S288c) (Baker's yeast).